Here is a 219-residue protein sequence, read N- to C-terminus: Imidazole glycerol phosphate synthase subunit HisH (219 aa).

The Glutamine amidotransferase type-1 domain maps to 2 to 218; that stretch reads KVVVIDSGTG…MVWTPEGTSG (217 aa). The active-site Nucleophile is cysteine 87. Active-site residues include histidine 193 and glutamate 195.

Heterodimer of HisH and HisF.

It localises to the cytoplasm. It carries out the reaction 5-[(5-phospho-1-deoxy-D-ribulos-1-ylimino)methylamino]-1-(5-phospho-beta-D-ribosyl)imidazole-4-carboxamide + L-glutamine = D-erythro-1-(imidazol-4-yl)glycerol 3-phosphate + 5-amino-1-(5-phospho-beta-D-ribosyl)imidazole-4-carboxamide + L-glutamate + H(+). It catalyses the reaction L-glutamine + H2O = L-glutamate + NH4(+). Its pathway is amino-acid biosynthesis; L-histidine biosynthesis; L-histidine from 5-phospho-alpha-D-ribose 1-diphosphate: step 5/9. Functionally, IGPS catalyzes the conversion of PRFAR and glutamine to IGP, AICAR and glutamate. The HisH subunit catalyzes the hydrolysis of glutamine to glutamate and ammonia as part of the synthesis of IGP and AICAR. The resulting ammonia molecule is channeled to the active site of HisF. This is Imidazole glycerol phosphate synthase subunit HisH from Granulibacter bethesdensis (strain ATCC BAA-1260 / CGDNIH1).